The sequence spans 273 residues: MEESLCNLSVKDLMEAGAHFGHQTRRWNPKMKLYIFEEKNGLYIINLAKTLYQLRKALPQVCKVIKENKPILFVGTKKQAKCVIKEAAIEAGEYFVAERWLGGMLTNMTTIRNSIKTLDKIEKDLTQNSSYLTKKEIALLAKRHQKLLKNLEGIRYLRKTPGLVIVVDPGYEKIAVAEAKKLGIPVLALVDTNCDPTPIDHVIPCNDDSLKSIRLIISAIKDAIVNTKKKLGVEIVSPIKALTSDEEANSSAEENENRQEDLLAKKYDSSEAN.

The tract at residues 244–273 (SDEEANSSAEENENRQEDLLAKKYDSSEAN) is disordered. The segment covering 255-273 (NENRQEDLLAKKYDSSEAN) has biased composition (basic and acidic residues).

It belongs to the universal ribosomal protein uS2 family.

The sequence is that of Small ribosomal subunit protein uS2 from Chlamydia felis (strain Fe/C-56) (Chlamydophila felis).